We begin with the raw amino-acid sequence, 182 residues long: Adenylate kinase isoenzyme 6 homolog (182 aa).

A disordered region spans residues Met1–Thr20. ATP contacts are provided by Gly19, Gly21, Lys22, Ser23, and Thr24. The segment at Glu39 to Leu62 is NMPbind. The segment at Ser116–Glu126 is LID. Arg117 provides a ligand contact to ATP.

This sequence belongs to the adenylate kinase family. AK6 subfamily. Monomer and homodimer. Interacts with small ribosomal subunit protein uS11. Not a structural component of 43S pre-ribosomes, but transiently interacts with them by binding to uS11.

Its subcellular location is the cytoplasm. The protein localises to the nucleus. The catalysed reaction is AMP + ATP = 2 ADP. The enzyme catalyses ATP + H2O = ADP + phosphate + H(+). Functionally, broad-specificity nucleoside monophosphate (NMP) kinase that catalyzes the reversible transfer of the terminal phosphate group between nucleoside triphosphates and monophosphates. Also has ATPase activity. Involved in the late cytoplasmic maturation steps of the 40S ribosomal particles, specifically 18S rRNA maturation. While NMP activity is not required for ribosome maturation, ATPase activity is. Associates transiently with small ribosomal subunit protein uS11. ATP hydrolysis breaks the interaction with uS11. May temporarily remove uS11 from the ribosome to enable a conformational change of the ribosomal RNA that is needed for the final maturation step of the small ribosomal subunit. Its NMP activity may have a role in nuclear energy homeostasis. AMP and dAMP are the preferred substrates, but CMP and TMP are also good substrates. ATP and dATP are the best phosphate donors. This Caenorhabditis elegans protein is Adenylate kinase isoenzyme 6 homolog.